Consider the following 493-residue polypeptide: Solute carrier family 2, facilitated glucose transporter member 3 (493 aa).

The Cytoplasmic portion of the chain corresponds to 1–10 (MGTAKVTPSL). Residues 11–32 (VFAVTVATIGSFQFGYNTGVIN) form a helical membrane-spanning segment. Residues 33–64 (APETIIKDFLNYTLEERLEDLPREGLLTTLWS) are Extracellular-facing. Asn43 is a glycosylation site (N-linked (GlcNAc...) asparagine). Residues 65–85 (LCVAIFSVGGMIGSFSVGLFV) traverse the membrane as a helical segment. Residues 86 to 90 (NRFGR) lie on the Cytoplasmic side of the membrane. Residues 91 to 111 (RNSMLLVNLIAILGGCLMGFA) traverse the membrane as a helical segment. The Extracellular portion of the chain corresponds to 112 to 118 (KIAESVE). Residues 119 to 142 (MLILGRLIIGIFCGLCTGFVPMYI) form a helical membrane-spanning segment. Topologically, residues 143 to 153 (GEVSPTALRGA) are cytoplasmic. A helical transmembrane segment spans residues 154–174 (FGTLNQLGIVVGILVAQVFGL). A D-glucose-binding site is contributed by Gln159. Residues 175–183 (DFILGSEEL) lie on the Extracellular side of the membrane. The chain crosses the membrane as a helical span at residues 184–204 (WPGLLGLTIIPAILQSAALPF). The Cytoplasmic segment spans residues 205-269 (CPESPRFLLI…LFKSPSYFQP (65 aa)). The residue at position 232 (Thr232) is a Phosphothreonine. A helical membrane pass occupies residues 270–290 (LLISVVLQLSQQFSGINAVFY). Positions 277–279 (QLS) are important for selectivity against fructose. Residues 280–281 (QQ) and Asn286 contribute to the D-glucose site. Residues 291 to 304 (YSTGIFQDAGVQEP) lie on the Extracellular side of the membrane. The chain crosses the membrane as a helical span at residues 305-325 (IYATIGAGVVNTIFTVVSLFL). Asn315 provides a ligand contact to D-glucose. The Cytoplasmic portion of the chain corresponds to 326 to 331 (VERAGR). Residues 332-352 (RTLHMIGLGGMAVCSVFMTIS) form a helical membrane-spanning segment. Over 353–363 (LLLKDEYEAMS) the chain is Extracellular. A helical transmembrane segment spans residues 364-389 (FVCIVAILVYVAFFEIGPGPIPWFIV). D-glucose is bound by residues Glu378 and Trp386. Residues 390–399 (AELFSQGPRP) are Cytoplasmic-facing. A helical membrane pass occupies residues 400 to 420 (AAMAVAGCSNWTSNFLVGMFF). The Extracellular segment spans residues 421–429 (PSAAAYLGA). A helical transmembrane segment spans residues 430–450 (YVFIIFAAFLVFFLIFTSFKV). Topologically, residues 451–493 (PETKGRTFEDITRAFEGQAHSGKGSAGVELNSMQPVKETPGNA) are cytoplasmic. Residues Ser471, Ser475, and Ser482 each carry the phosphoserine modification. Thr489 bears the Phosphothreonine mark.

Belongs to the major facilitator superfamily. Sugar transporter (TC 2.A.1.1) family. Glucose transporter subfamily. In terms of assembly, interacts with SMIM43; the interaction may promote SLC2A3-mediated glucose transport to meet the energy needs of mesendoderm differentiation. Brain and osteoblastic cells (at protein level). Highly expressed in brain.

It localises to the cell membrane. It is found in the perikaryon. The protein localises to the cell projection. The catalysed reaction is D-glucose(out) = D-glucose(in). It carries out the reaction D-galactose(in) = D-galactose(out). With respect to regulation, deoxyglucose transport is inhibited by D-glucose, D-galactose and maltose. Galactose transport is inhibited by D-glucose and maltose. Its function is as follows. Facilitative glucose transporter. Can also mediate the uptake of various other monosaccharides across the cell membrane. Mediates the uptake of glucose, 2-deoxyglucose, galactose, mannose, xylose and fucose, and probably also dehydroascorbate. Does not mediate fructose transport. Required for mesendoderm differentiation. This is Solute carrier family 2, facilitated glucose transporter member 3 from Rattus norvegicus (Rat).